A 170-amino-acid polypeptide reads, in one-letter code: Type II secretion system protein H (170 aa).

Positions 1-5 (MRQRG) are cleaved as a propeptide — leader sequence. At Phe-6 the chain carries N-methylphenylalanine. The helical transmembrane segment at 6 to 29 (FTLLEMMLILLLMGVSAGMVLLAF) threads the bilayer.

Belongs to the GSP H family. In terms of assembly, type II secretion is composed of four main components: the outer membrane complex, the inner membrane complex, the cytoplasmic secretion ATPase and the periplasm-spanning pseudopilus. Interacts with core component PulG. In terms of processing, cleaved by prepilin peptidase. Methylated by prepilin peptidase at the amino group of the N-terminal phenylalanine once the leader sequence is cleaved by prepilin peptidase.

Its subcellular location is the cell inner membrane. Component of the type II secretion system required for the energy-dependent secretion of extracellular factors such as proteases and toxins from the periplasm. Part of the pseudopilus tip complex that is critical for the recognition and binding of secretion substrates. The polypeptide is Type II secretion system protein H (pulH) (Klebsiella pneumoniae).